The chain runs to 96 residues: Cobalt transport protein CbiN (96 aa).

The next 2 membrane-spanning stretches (helical) occupy residues 4 to 24 (WLAAGGILLGALVVFSFVSAG) and 59 to 79 (IESLLFSIQAAVGGIIIGYYL).

Belongs to the CbiN family. In terms of assembly, forms an energy-coupling factor (ECF) transporter complex composed of an ATP-binding protein (A component, CbiO), a transmembrane protein (T component, CbiQ) and 2 possible substrate-capture proteins (S components, CbiM and CbiN) of unknown stoichimetry.

It is found in the cell membrane. It functions in the pathway cofactor biosynthesis; adenosylcobalamin biosynthesis. In terms of biological role, part of the energy-coupling factor (ECF) transporter complex CbiMNOQ involved in cobalt import. This is Cobalt transport protein CbiN from Halobacterium salinarum (strain ATCC 29341 / DSM 671 / R1).